A 278-amino-acid polypeptide reads, in one-letter code: 2-dehydro-3-deoxyphosphooctonate aldolase (278 aa).

This sequence belongs to the KdsA family.

The protein resides in the cytoplasm. It carries out the reaction D-arabinose 5-phosphate + phosphoenolpyruvate + H2O = 3-deoxy-alpha-D-manno-2-octulosonate-8-phosphate + phosphate. Its pathway is carbohydrate biosynthesis; 3-deoxy-D-manno-octulosonate biosynthesis; 3-deoxy-D-manno-octulosonate from D-ribulose 5-phosphate: step 2/3. The protein operates within bacterial outer membrane biogenesis; lipopolysaccharide biosynthesis. The protein is 2-dehydro-3-deoxyphosphooctonate aldolase of Fusobacterium nucleatum subsp. nucleatum (strain ATCC 25586 / DSM 15643 / BCRC 10681 / CIP 101130 / JCM 8532 / KCTC 2640 / LMG 13131 / VPI 4355).